A 268-amino-acid chain; its full sequence is Tryptophan synthase alpha chain (268 aa).

Catalysis depends on proton acceptor residues glutamate 49 and aspartate 60.

Belongs to the TrpA family. In terms of assembly, tetramer of two alpha and two beta chains.

The enzyme catalyses (1S,2R)-1-C-(indol-3-yl)glycerol 3-phosphate + L-serine = D-glyceraldehyde 3-phosphate + L-tryptophan + H2O. Its pathway is amino-acid biosynthesis; L-tryptophan biosynthesis; L-tryptophan from chorismate: step 5/5. Functionally, the alpha subunit is responsible for the aldol cleavage of indoleglycerol phosphate to indole and glyceraldehyde 3-phosphate. This chain is Tryptophan synthase alpha chain, found in Escherichia coli (strain 55989 / EAEC).